The following is a 120-amino-acid chain: NAD(P)H-quinone oxidoreductase subunit 3, chloroplastic (120 aa).

Helical transmembrane passes span 9–29 (IFWT…WISG), 64–84 (MFAL…PWAM), and 88–108 (VLGV…VVGL).

It belongs to the complex I subunit 3 family. NDH is composed of at least 16 different subunits, 5 of which are encoded in the nucleus.

The protein resides in the plastid. It is found in the chloroplast thylakoid membrane. The catalysed reaction is a plastoquinone + NADH + (n+1) H(+)(in) = a plastoquinol + NAD(+) + n H(+)(out). It catalyses the reaction a plastoquinone + NADPH + (n+1) H(+)(in) = a plastoquinol + NADP(+) + n H(+)(out). NDH shuttles electrons from NAD(P)H:plastoquinone, via FMN and iron-sulfur (Fe-S) centers, to quinones in the photosynthetic chain and possibly in a chloroplast respiratory chain. The immediate electron acceptor for the enzyme in this species is believed to be plastoquinone. Couples the redox reaction to proton translocation, and thus conserves the redox energy in a proton gradient. In Brachypodium distachyon (Purple false brome), this protein is NAD(P)H-quinone oxidoreductase subunit 3, chloroplastic.